Here is a 272-residue protein sequence, read N- to C-terminus: Shikimate dehydrogenase (NADP(+)) (272 aa).

Residues 14–16 and Thr-61 contribute to the shikimate site; that span reads SKS. The active-site Proton acceptor is the Lys-65. Position 77 (Glu-77) interacts with NADP(+). Shikimate is bound by residues Asn-86 and Asp-102. NADP(+) is bound by residues 126-130, 149-154, and Met-212; these read GAGGA and NRTADK. Tyr-214 serves as a coordination point for shikimate. Gly-237 is a binding site for NADP(+).

The protein belongs to the shikimate dehydrogenase family. Homodimer.

It catalyses the reaction shikimate + NADP(+) = 3-dehydroshikimate + NADPH + H(+). It participates in metabolic intermediate biosynthesis; chorismate biosynthesis; chorismate from D-erythrose 4-phosphate and phosphoenolpyruvate: step 4/7. Its function is as follows. Involved in the biosynthesis of the chorismate, which leads to the biosynthesis of aromatic amino acids. Catalyzes the reversible NADPH linked reduction of 3-dehydroshikimate (DHSA) to yield shikimate (SA). In Glaesserella parasuis serovar 5 (strain SH0165) (Haemophilus parasuis), this protein is Shikimate dehydrogenase (NADP(+)).